The chain runs to 204 residues: Large ribosomal subunit protein bL25 (204 aa).

Belongs to the bacterial ribosomal protein bL25 family. CTC subfamily. In terms of assembly, part of the 50S ribosomal subunit; part of the 5S rRNA/L5/L18/L25 subcomplex. Contacts the 5S rRNA. Binds to the 5S rRNA independently of L5 and L18.

This is one of the proteins that binds to the 5S RNA in the ribosome where it forms part of the central protuberance. In Burkholderia mallei (strain NCTC 10247), this protein is Large ribosomal subunit protein bL25.